The primary structure comprises 142 residues: Hemoglobin subunit alpha-A (142 aa).

In terms of domain architecture, Globin spans valine 2–arginine 142. Position 59 (histidine 59) interacts with O2. Histidine 88 contributes to the heme b binding site.

This sequence belongs to the globin family. As to quaternary structure, heterotetramer of two alpha chains and two beta chains. Red blood cells.

Its function is as follows. Involved in oxygen transport from the lung to the various peripheral tissues. This Anseranas semipalmata (Magpie goose) protein is Hemoglobin subunit alpha-A (HBAA).